A 1220-amino-acid chain; its full sequence is Polycomb protein Sfmbt (1220 aa).

The segment at 322-357 (PIQKDGMAVCKRCGAIGVKHTFYTKSRRFCSMACAR) adopts an FCS-type zinc-finger fold. Positions 331, 334, 351, and 355 each coordinate Zn(2+). 2 disordered regions span residues 371–399 (GDQA…QSQS) and 464–483 (DATA…SYLS). Polar residues predominate over residues 473-482 (EGASTPNSYL). MBT repeat units follow at residues 536-647 (YDWL…LIPP), 655-753 (KDWK…LAAP), 761-871 (LAGR…VTPP), and 879-975 (FTWE…LEGP). 2 disordered regions span residues 976–1024 (PRVA…IALK) and 1050–1092 (NNQP…AGSG). Basic residues predominate over residues 991–1000 (KIQRKRKPKK). Residues 1052-1068 (QPEEEGDEEDPDADGDG) are compositionally biased toward acidic residues. Polar residues predominate over residues 1071–1082 (STSHISEQSTTQ). Low complexity predominate over residues 1083-1092 (SSSDLIAGSG). One can recognise an SAM domain in the interval 1140–1203 (WNVYDVSQFL…SDLIAQLKCK (64 aa)).

In terms of assembly, interacts with pho as a component of the pho-repressive complex (PhoRC).

Its subcellular location is the nucleus. Polycomb group (PcG) protein that binds to the Polycomb response elements (PREs) found in the regulatory regions of many genes. PcG proteins act by forming multiprotein complexes, which are required to maintain the transcriptionally repressive state of homeotic genes throughout development. PcG proteins are not required to initiate repression, but to maintain it during later stages of development. They probably act via the methylation of histones, rendering chromatin heritably changed in its expressibility. Necessary but not sufficient to recruit a functional PcG repressive complex that represses target genes, suggesting that the recruitment of the distinct PRC1 complex is also required to allow a subsequent repression. This Drosophila melanogaster (Fruit fly) protein is Polycomb protein Sfmbt.